We begin with the raw amino-acid sequence, 237 residues long: MKHSYFISDLHLSETQPELTALFVDFMQNLAPQAERLYILGDLFDFWIGDDEQSALIQQVKDLIKFVSDQGVQCYFQHGNRDFLIGERFSKETGAQLLPDYQLITLYDKKILLCHGDTLCIDDEAYQQFRRRVHQKWLQRLFLCLPLKVRVIIAEKIRAKSNQDKQAKSQEIMDVNQAFTAEKVQEFGVNLLIHGHTHREAIHQQEEFTRIVLGDWRKNYASILKMDESGEFGFIKD.

Mn(2+) contacts are provided by D9, H11, D42, N80, and H115. 80–81 serves as a coordination point for substrate; sequence NR. Substrate is bound by residues D123, S161, K165, K168, and H196. Mn(2+) is bound by residues H196 and H198.

The protein belongs to the LpxH family. Mn(2+) serves as cofactor.

It is found in the cell inner membrane. Its subcellular location is the cytoplasm. It carries out the reaction UDP-2-N,3-O-bis[(3R)-3-hydroxytetradecanoyl]-alpha-D-glucosamine + H2O = 2-N,3-O-bis[(3R)-3-hydroxytetradecanoyl]-alpha-D-glucosaminyl 1-phosphate + UMP + 2 H(+). It functions in the pathway glycolipid biosynthesis; lipid IV(A) biosynthesis; lipid IV(A) from (3R)-3-hydroxytetradecanoyl-[acyl-carrier-protein] and UDP-N-acetyl-alpha-D-glucosamine: step 4/6. Its function is as follows. Hydrolyzes the pyrophosphate bond of UDP-2,3-diacylglucosamine to yield 2,3-diacylglucosamine 1-phosphate (lipid X) and UMP by catalyzing the attack of water at the alpha-P atom. Involved in the biosynthesis of lipid A, a phosphorylated glycolipid that anchors the lipopolysaccharide to the outer membrane of the cell. This Haemophilus influenzae (strain ATCC 51907 / DSM 11121 / KW20 / Rd) protein is UDP-2,3-diacylglucosamine hydrolase.